The primary structure comprises 200 residues: Lipopolysaccharide core heptose(II)-phosphate phosphatase (200 aa).

The signal sequence occupies residues 1 to 25 (MLAFCRSSLKSKKYFIILLALAAIA).

It belongs to the phosphoglycerate mutase family. Ais subfamily.

Its subcellular location is the periplasm. The protein operates within bacterial outer membrane biogenesis; lipopolysaccharide metabolism. Its function is as follows. Catalyzes the dephosphorylation of heptose(II) of the outer membrane lipopolysaccharide core. This is Lipopolysaccharide core heptose(II)-phosphate phosphatase from Escherichia coli O157:H7 (strain EC4115 / EHEC).